A 137-amino-acid polypeptide reads, in one-letter code: 1,4-dihydroxy-2-naphthoyl-CoA hydrolase (137 aa).

Aspartate 12 is an active-site residue.

This sequence belongs to the 4-hydroxybenzoyl-CoA thioesterase family. DHNA-CoA hydrolase subfamily.

It catalyses the reaction 1,4-dihydroxy-2-naphthoyl-CoA + H2O = 1,4-dihydroxy-2-naphthoate + CoA + H(+). The protein operates within cofactor biosynthesis; phylloquinone biosynthesis. It participates in quinol/quinone metabolism; 1,4-dihydroxy-2-naphthoate biosynthesis; 1,4-dihydroxy-2-naphthoate from chorismate: step 7/7. Catalyzes the hydrolysis of 1,4-dihydroxy-2-naphthoyl-CoA (DHNA-CoA) to 1,4-dihydroxy-2-naphthoate (DHNA), a reaction involved in phylloquinone (vitamin K1) biosynthesis. In Acaryochloris marina (strain MBIC 11017), this protein is 1,4-dihydroxy-2-naphthoyl-CoA hydrolase.